A 56-amino-acid chain; its full sequence is Secreted virulence factor CLU5a (56 aa).

A signal peptide spans 1–18 (MKVSLTLLATLCASLASA).

The protein belongs to the MC69 virulence factor family. Homodimer; disulfide-linked. Dimerization can possibly extend to multimerisation.

It localises to the secreted. In terms of biological role, secreted protein required for appressorial penetration of intact host epidermal cells and for pathogenicit, but not for subsequent biotrophic and necrotrophic colonization of leaves. The sequence is that of Secreted virulence factor CLU5a from Colletotrichum graminicola (strain M1.001 / M2 / FGSC 10212) (Maize anthracnose fungus).